A 344-amino-acid chain; its full sequence is Heat-inducible transcription repressor HrcA (344 aa).

This sequence belongs to the HrcA family.

Negative regulator of class I heat shock genes (grpE-dnaK-dnaJ and groELS operons). Prevents heat-shock induction of these operons. This is Heat-inducible transcription repressor HrcA from Streptococcus pneumoniae (strain 70585).